The primary structure comprises 819 residues: Outer membrane usher protein CssD (819 aa).

It belongs to the fimbrial export usher family.

Its subcellular location is the cell outer membrane. Functionally, involved in the export and assembly of C6 fimbrial subunits across the outer membrane. This is Outer membrane usher protein CssD (cssD) from Escherichia coli.